A 263-amino-acid chain; its full sequence is ATP synthase subunit b 2 (263 aa).

The helical transmembrane segment at 2–22 (LIDPLTVVAQIINFLILVALL) threads the bilayer.

The protein belongs to the ATPase B chain family. F-type ATPases have 2 components, F(1) - the catalytic core - and F(0) - the membrane proton channel. F(1) has five subunits: alpha(3), beta(3), gamma(1), delta(1), epsilon(1). F(0) has four main subunits: a(1), b(1), b'(1) and c(10-14). The alpha and beta chains form an alternating ring which encloses part of the gamma chain. F(1) is attached to F(0) by a central stalk formed by the gamma and epsilon chains, while a peripheral stalk is formed by the delta, b and b' chains.

It is found in the cellular thylakoid membrane. F(1)F(0) ATP synthase produces ATP from ADP in the presence of a proton or sodium gradient. F-type ATPases consist of two structural domains, F(1) containing the extramembraneous catalytic core and F(0) containing the membrane proton channel, linked together by a central stalk and a peripheral stalk. During catalysis, ATP synthesis in the catalytic domain of F(1) is coupled via a rotary mechanism of the central stalk subunits to proton translocation. In terms of biological role, component of the F(0) channel, it forms part of the peripheral stalk, linking F(1) to F(0). The polypeptide is ATP synthase subunit b 2 (Acaryochloris marina (strain MBIC 11017)).